The sequence spans 159 residues: Endoribonuclease YbeY (159 aa).

Residues His114, His118, and His124 each coordinate Zn(2+).

It belongs to the endoribonuclease YbeY family. Requires Zn(2+) as cofactor.

It localises to the cytoplasm. Single strand-specific metallo-endoribonuclease involved in late-stage 70S ribosome quality control and in maturation of the 3' terminus of the 16S rRNA. This Pectobacterium atrosepticum (strain SCRI 1043 / ATCC BAA-672) (Erwinia carotovora subsp. atroseptica) protein is Endoribonuclease YbeY.